The chain runs to 600 residues: UDP-sugar pyrophospharylase (600 aa).

This sequence belongs to the USP family. Mg(2+) serves as cofactor. Mn(2+) is required as a cofactor. In terms of processing, the N-terminus is blocked.

It catalyses the reaction a monosaccharide 1-phosphate + UTP + H(+) = a UDP-monosaccharide + diphosphate. With respect to regulation, inhibited by a high concentration of pyrophosphate. In terms of biological role, may function as the terminal enzyme of the myo-inositol oxidation (MIO) pathway. May also play a role in the salvage pathway for synthesis of nucleotide sugars. This is UDP-sugar pyrophospharylase (USP) from Pisum sativum (Garden pea).